A 174-amino-acid polypeptide reads, in one-letter code: Cell division protein FtsL (174 aa).

Residues 1-38 (MLAAPRELSYIPQPVVSSKQSPRSGLSNRRRESRARQK) are Cytoplasmic-facing. A helical transmembrane segment spans residues 39–59 (ILLLGLVLMGFVIGLSLTFLT). The Extracellular portion of the chain corresponds to 60–174 (MQVLIKGYKI…EPARQAGAGV (115 aa)).

The protein belongs to the FtsL family.

The protein localises to the cell membrane. In terms of biological role, essential cell division protein. The polypeptide is Cell division protein FtsL (Moorella thermoacetica (strain ATCC 39073 / JCM 9320)).